Here is a 452-residue protein sequence, read N- to C-terminus: MLACLQRTQNAPGQHLACPSKSLELRKCEAVASAMHSSRYPSPAELDAYAEKVANSPLSIKIFPTNIRVPQHKHLSRTVNGYDTSGQRYSPYPQHTAGYQGLLAIVKAAVSSSSTAAPAGPAKSVLKSAEGKRTKLSPAAVQVGIAPYPVPSTLGPLAYPKPPEAPAPPPGLPAAATAASVIPLPGRGLPLPPSNLPSIHSLLYQLNQQCQAPGAAPPACQGMAIPHPSPAKHGPVPSFPSMAYSAAAGLPDCRKGTELGQGATQALTLAGAAKPAGYADSGLDYLLWPQKPPPPPPQPLRAYSGSTVASKSPEACGGRAYERASGSPLNCGVGLPTSFTVGQYFAAPWNSVLVTPTSDCYNPAAAVVVTELGPGAARELAGPPADALSGLPSKSVCNTSVLSSSLQSLEYLINDIRPPCIKEQMLGKGYETVAVPRLLDHQHAHIRLPVYR.

Belongs to the FAM222 family.

The sequence is that of Protein FAM222A (FAM222A) from Homo sapiens (Human).